The chain runs to 334 residues: MAVVLDLLNNDTRPKVEAPARPRHPEKAHRPDTAIQRKPDWIRVKAPGSKLWAETKDIVRANNLVTVCEEAGCPNIGECWEKRHATFMIMGDTCTRACAFCNVRTGLPESLDAAEPEKVADAVAKLGLHHVVVTSVDRDDLKDGGAEHFSRTIAAIRRASPGTTVEILTPDFLRKPGALEVVVAAKPDVFNHNLETVPGKYVTVRPGARYFHSVRLLQRVKELDPTIFTKSGIMVGLGEERNEVVQLMDDLRSAEVDFLTIGQYLQPTRKHHEVVRFVPPDEFKAYETTAYAKGFLLVSATPLTRSSHHAGEDFARLKAARLAKLGPAPVAVNA.

The tract at residues 8–33 (LNNDTRPKVEAPARPRHPEKAHRPDT) is disordered. Basic and acidic residues predominate over residues 12–33 (TRPKVEAPARPRHPEKAHRPDT). The [4Fe-4S] cluster site is built by cysteine 68, cysteine 73, cysteine 79, cysteine 94, cysteine 98, cysteine 101, and serine 307. Residues 80–296 (WEKRHATFMI…ETTAYAKGFL (217 aa)) enclose the Radical SAM core domain.

This sequence belongs to the radical SAM superfamily. Lipoyl synthase family. Requires [4Fe-4S] cluster as cofactor.

The protein localises to the cytoplasm. It catalyses the reaction [[Fe-S] cluster scaffold protein carrying a second [4Fe-4S](2+) cluster] + N(6)-octanoyl-L-lysyl-[protein] + 2 oxidized [2Fe-2S]-[ferredoxin] + 2 S-adenosyl-L-methionine + 4 H(+) = [[Fe-S] cluster scaffold protein] + N(6)-[(R)-dihydrolipoyl]-L-lysyl-[protein] + 4 Fe(3+) + 2 hydrogen sulfide + 2 5'-deoxyadenosine + 2 L-methionine + 2 reduced [2Fe-2S]-[ferredoxin]. It functions in the pathway protein modification; protein lipoylation via endogenous pathway; protein N(6)-(lipoyl)lysine from octanoyl-[acyl-carrier-protein]: step 2/2. Functionally, catalyzes the radical-mediated insertion of two sulfur atoms into the C-6 and C-8 positions of the octanoyl moiety bound to the lipoyl domains of lipoate-dependent enzymes, thereby converting the octanoylated domains into lipoylated derivatives. The polypeptide is Lipoyl synthase (Methylorubrum populi (strain ATCC BAA-705 / NCIMB 13946 / BJ001) (Methylobacterium populi)).